Consider the following 103-residue polypeptide: Large ribosomal subunit protein bL21 (103 aa).

Belongs to the bacterial ribosomal protein bL21 family. In terms of assembly, part of the 50S ribosomal subunit. Contacts protein L20.

Functionally, this protein binds to 23S rRNA in the presence of protein L20. This chain is Large ribosomal subunit protein bL21, found in Bordetella avium (strain 197N).